A 154-amino-acid polypeptide reads, in one-letter code: Crossover junction endodeoxyribonuclease RuvC (154 aa).

Catalysis depends on residues Asp-7, Glu-66, and Asp-139. Mg(2+)-binding residues include Asp-7, Glu-66, and Asp-139.

Belongs to the RuvC family. Homodimer which binds Holliday junction (HJ) DNA. The HJ becomes 2-fold symmetrical on binding to RuvC with unstacked arms; it has a different conformation from HJ DNA in complex with RuvA. In the full resolvosome a probable DNA-RuvA(4)-RuvB(12)-RuvC(2) complex forms which resolves the HJ. Mg(2+) serves as cofactor.

Its subcellular location is the cytoplasm. It carries out the reaction Endonucleolytic cleavage at a junction such as a reciprocal single-stranded crossover between two homologous DNA duplexes (Holliday junction).. The RuvA-RuvB-RuvC complex processes Holliday junction (HJ) DNA during genetic recombination and DNA repair. Endonuclease that resolves HJ intermediates. Cleaves cruciform DNA by making single-stranded nicks across the HJ at symmetrical positions within the homologous arms, yielding a 5'-phosphate and a 3'-hydroxyl group; requires a central core of homology in the junction. The consensus cleavage sequence is 5'-(A/T)TT(C/G)-3'. Cleavage occurs on the 3'-side of the TT dinucleotide at the point of strand exchange. HJ branch migration catalyzed by RuvA-RuvB allows RuvC to scan DNA until it finds its consensus sequence, where it cleaves and resolves the cruciform DNA. This is Crossover junction endodeoxyribonuclease RuvC from Aliarcobacter butzleri (strain RM4018) (Arcobacter butzleri).